Consider the following 264-residue polypeptide: Undecaprenyl-diphosphatase (264 aa).

A run of 7 helical transmembrane segments spans residues 34-54 (LLNLPIAIAYSFGLFMEMGSI), 75-95 (LLYLAIITIITGLVGVPLYII), 104-124 (YDPSIPMIILGIALIVDGLYI), 137-157 (LSLKNIILIGIAQGLAALPGV), 180-200 (YSYLAYIPAAVGAVGTTILFS), 207-227 (VISLIGIGGVLISVISAFIIG), and 243-263 (IYIIDFTLGGIAIVVSVLTIL).

It belongs to the UppP family.

The protein resides in the cell membrane. The catalysed reaction is di-trans,octa-cis-undecaprenyl diphosphate + H2O = di-trans,octa-cis-undecaprenyl phosphate + phosphate + H(+). Functionally, catalyzes the dephosphorylation of undecaprenyl diphosphate (UPP). This Sulfurisphaera tokodaii (strain DSM 16993 / JCM 10545 / NBRC 100140 / 7) (Sulfolobus tokodaii) protein is Undecaprenyl-diphosphatase.